The chain runs to 455 residues: Gamma-glutamyl phosphate reductase (455 aa).

This sequence belongs to the gamma-glutamyl phosphate reductase family.

It is found in the cytoplasm. It catalyses the reaction L-glutamate 5-semialdehyde + phosphate + NADP(+) = L-glutamyl 5-phosphate + NADPH + H(+). It functions in the pathway amino-acid biosynthesis; L-proline biosynthesis; L-glutamate 5-semialdehyde from L-glutamate: step 2/2. Functionally, catalyzes the NADPH-dependent reduction of L-glutamate 5-phosphate into L-glutamate 5-semialdehyde and phosphate. The product spontaneously undergoes cyclization to form 1-pyrroline-5-carboxylate. This Synechococcus sp. (strain JA-2-3B'a(2-13)) (Cyanobacteria bacterium Yellowstone B-Prime) protein is Gamma-glutamyl phosphate reductase.